The sequence spans 233 residues: Small ribosomal subunit protein uS2 (233 aa).

Belongs to the universal ribosomal protein uS2 family.

The chain is Small ribosomal subunit protein uS2 from Clostridium beijerinckii (strain ATCC 51743 / NCIMB 8052) (Clostridium acetobutylicum).